The following is a 463-amino-acid chain: tRNA-2-methylthio-N(6)-dimethylallyladenosine synthase (463 aa).

In terms of domain architecture, MTTase N-terminal spans 5–125 (RKLHIKSYGC…LPQLLAKAEQ (121 aa)). Residues Cys14, Cys50, Cys88, Cys166, Cys170, and Cys173 each contribute to the [4Fe-4S] cluster site. The region spanning 152 to 384 (RARGISAFVT…QQLIDQQQSA (233 aa)) is the Radical SAM core domain. The region spanning 387–449 (KAAIGRTVEV…RYSLLGELAS (63 aa)) is the TRAM domain.

Belongs to the methylthiotransferase family. MiaB subfamily. As to quaternary structure, monomer. The cofactor is [4Fe-4S] cluster.

It localises to the cytoplasm. It catalyses the reaction N(6)-dimethylallyladenosine(37) in tRNA + (sulfur carrier)-SH + AH2 + 2 S-adenosyl-L-methionine = 2-methylsulfanyl-N(6)-dimethylallyladenosine(37) in tRNA + (sulfur carrier)-H + 5'-deoxyadenosine + L-methionine + A + S-adenosyl-L-homocysteine + 2 H(+). In terms of biological role, catalyzes the methylthiolation of N6-(dimethylallyl)adenosine (i(6)A), leading to the formation of 2-methylthio-N6-(dimethylallyl)adenosine (ms(2)i(6)A) at position 37 in tRNAs that read codons beginning with uridine. This Rhodopseudomonas palustris (strain ATCC BAA-98 / CGA009) protein is tRNA-2-methylthio-N(6)-dimethylallyladenosine synthase.